The sequence spans 144 residues: D-aminoacyl-tRNA deacylase (144 aa).

A Gly-cisPro motif, important for rejection of L-amino acids motif is present at residues 136–137 (GP).

This sequence belongs to the DTD family. Homodimer.

It localises to the cytoplasm. It carries out the reaction glycyl-tRNA(Ala) + H2O = tRNA(Ala) + glycine + H(+). The enzyme catalyses a D-aminoacyl-tRNA + H2O = a tRNA + a D-alpha-amino acid + H(+). An aminoacyl-tRNA editing enzyme that deacylates mischarged D-aminoacyl-tRNAs. Also deacylates mischarged glycyl-tRNA(Ala), protecting cells against glycine mischarging by AlaRS. Acts via tRNA-based rather than protein-based catalysis; rejects L-amino acids rather than detecting D-amino acids in the active site. By recycling D-aminoacyl-tRNA to D-amino acids and free tRNA molecules, this enzyme counteracts the toxicity associated with the formation of D-aminoacyl-tRNA entities in vivo and helps enforce protein L-homochirality. The chain is D-aminoacyl-tRNA deacylase from Corynebacterium efficiens (strain DSM 44549 / YS-314 / AJ 12310 / JCM 11189 / NBRC 100395).